The primary structure comprises 150 residues: Protein U1 (150 aa).

This sequence belongs to the nanovirus U1 protein family.

The polypeptide is Protein U1 (DNA-U1) (Astragalus sinicus (Chinese milk vetch)).